The chain runs to 158 residues: Probable deoxyuridine 5'-triphosphate nucleotidohydrolase (158 aa).

The protein belongs to the dUTPase family. Mg(2+) serves as cofactor.

The enzyme catalyses dUTP + H2O = dUMP + diphosphate + H(+). It functions in the pathway pyrimidine metabolism; dUMP biosynthesis; dUMP from dCTP (dUTP route): step 1/2. In terms of biological role, this enzyme is involved in nucleotide metabolism: it produces dUMP, the immediate precursor of thymidine nucleotides and it decreases the intracellular concentration of dUTP so that uracil cannot be incorporated into DNA. It does probably not deaminate dCTP. The sequence is that of Probable deoxyuridine 5'-triphosphate nucleotidohydrolase from Sulfolobus islandicus rod-shaped virus 1 (SIRV-1).